Reading from the N-terminus, the 177-residue chain is MKQILNILPMFIFFIFYKFYDIFIASGSLIVISGLICIIHWIFYNEIDKISLFSFLSVFFFGSLTIFFHNSQFIKWKITIIYIIFSLVLLISQFFTRKPMIQRFLEKDIKISNIYWRKINFIWSLFFLFCAILNIYIAYYFSETIWVNFKVFGFTSLTFFLILITSIYINCKISKNK.

Helical transmembrane passes span 22–42 (IFIASGSLIVISGLICIIHWI), 50–70 (ISLFSFLSVFFFGSLTIFFHN), 76–96 (WKITIIYIIFSLVLLISQFFT), 121–141 (FIWSLFFLFCAILNIYIAYYF), and 149–169 (FKVFGFTSLTFFLILITSIYI).

The protein belongs to the YciB family.

The protein localises to the cell inner membrane. Plays a role in cell envelope biogenesis, maintenance of cell envelope integrity and membrane homeostasis. The sequence is that of Inner membrane-spanning protein YciB from Buchnera aphidicola subsp. Acyrthosiphon pisum (strain APS) (Acyrthosiphon pisum symbiotic bacterium).